A 522-amino-acid polypeptide reads, in one-letter code: Protein nucleotidyltransferase YdiU (522 aa).

The ATP site is built by G109, G111, R112, K132, D144, G145, R195, and R202. D271 serves as the catalytic Proton acceptor. Mg(2+) is bound by residues N272 and D281. An ATP-binding site is contributed by D281.

This sequence belongs to the SELO family. It depends on Mg(2+) as a cofactor. The cofactor is Mn(2+).

The enzyme catalyses L-seryl-[protein] + ATP = 3-O-(5'-adenylyl)-L-seryl-[protein] + diphosphate. The catalysed reaction is L-threonyl-[protein] + ATP = 3-O-(5'-adenylyl)-L-threonyl-[protein] + diphosphate. It carries out the reaction L-tyrosyl-[protein] + ATP = O-(5'-adenylyl)-L-tyrosyl-[protein] + diphosphate. It catalyses the reaction L-histidyl-[protein] + UTP = N(tele)-(5'-uridylyl)-L-histidyl-[protein] + diphosphate. The enzyme catalyses L-seryl-[protein] + UTP = O-(5'-uridylyl)-L-seryl-[protein] + diphosphate. The catalysed reaction is L-tyrosyl-[protein] + UTP = O-(5'-uridylyl)-L-tyrosyl-[protein] + diphosphate. Nucleotidyltransferase involved in the post-translational modification of proteins. It can catalyze the addition of adenosine monophosphate (AMP) or uridine monophosphate (UMP) to a protein, resulting in modifications known as AMPylation and UMPylation. The polypeptide is Protein nucleotidyltransferase YdiU (Burkholderia vietnamiensis (strain G4 / LMG 22486) (Burkholderia cepacia (strain R1808))).